A 556-amino-acid chain; its full sequence is 2-succinyl-5-enolpyruvyl-6-hydroxy-3-cyclohexene-1-carboxylate synthase (556 aa).

This sequence belongs to the TPP enzyme family. MenD subfamily. As to quaternary structure, homodimer. Mg(2+) is required as a cofactor. Requires Mn(2+) as cofactor. It depends on thiamine diphosphate as a cofactor.

The enzyme catalyses isochorismate + 2-oxoglutarate + H(+) = 5-enolpyruvoyl-6-hydroxy-2-succinyl-cyclohex-3-ene-1-carboxylate + CO2. It functions in the pathway quinol/quinone metabolism; 1,4-dihydroxy-2-naphthoate biosynthesis; 1,4-dihydroxy-2-naphthoate from chorismate: step 2/7. It participates in quinol/quinone metabolism; menaquinone biosynthesis. Its function is as follows. Catalyzes the thiamine diphosphate-dependent decarboxylation of 2-oxoglutarate and the subsequent addition of the resulting succinic semialdehyde-thiamine pyrophosphate anion to isochorismate to yield 2-succinyl-5-enolpyruvyl-6-hydroxy-3-cyclohexene-1-carboxylate (SEPHCHC). The sequence is that of 2-succinyl-5-enolpyruvyl-6-hydroxy-3-cyclohexene-1-carboxylate synthase from Escherichia coli O8 (strain IAI1).